The following is a 319-amino-acid chain: Heavy metal-associated isoprenylated plant protein 9 (319 aa).

Basic and acidic residues-rich tracts occupy residues 1–11 (MGEEVKPEAKE) and 24–45 (EEKKKDVAEEKKVAAEEEKPKE). The segment at 1–57 (MGEEVKPEAKEAASAPQAVPAEEEEKKKDVAEEKKVAAEEEKPKEEEEPQPPPPPPP) is disordered. Residues 21–48 (AEEEEKKKDVAEEKKVAAEEEKPKEEEE) are a coiled coil. HMA domains are found at residues 55-118 (PPPF…KRMA) and 144-208 (LTTV…KQAR). Cys-66, Cys-69, Cys-155, and Cys-158 together coordinate a metal cation. The segment at 207–282 (ARIVPQPDPE…RDNEMTAMAQ (76 aa)) is disordered. Positions 224–254 (QEEKKEESGEGNEKPPETGEEKEEEKKKEGE) are enriched in basic and acidic residues. The segment covering 255–268 (ENGEEGGGEEAAAT) has biased composition (acidic residues). The residue at position 316 (Cys-316) is a Cysteine methyl ester. Cys-316 carries the S-farnesyl cysteine lipid modification. Positions 317-319 (CIS) are cleaved as a propeptide — removed in mature form.

It belongs to the HIPP family.

Heavy-metal-binding protein. The protein is Heavy metal-associated isoprenylated plant protein 9 of Arabidopsis thaliana (Mouse-ear cress).